The chain runs to 471 residues: Mitochondrial distribution and morphology protein 10 (471 aa).

Residues 313–338 are disordered; it reads SNSAATPPRIKNSDSQVLSNNSTDSK. Residues 325 to 338 are compositionally biased toward polar residues; that stretch reads SDSQVLSNNSTDSK.

The protein belongs to the MDM10 family. In terms of assembly, component of the ER-mitochondria encounter structure (ERMES) or MDM complex, composed of MMM1, MDM10, MDM12 and MDM34. Associates with the mitochondrial outer membrane sorting assembly machinery SAM(core) complex.

The protein localises to the mitochondrion outer membrane. Component of the ERMES/MDM complex, which serves as a molecular tether to connect the endoplasmic reticulum and mitochondria. Components of this complex are involved in the control of mitochondrial shape and protein biogenesis and may function in phospholipid exchange. MDM10 is involved in the late assembly steps of the general translocase of the mitochondrial outer membrane (TOM complex). Functions in the TOM40-specific route of the assembly of outer membrane beta-barrel proteins, including the association of TOM40 with the receptor TOM22 and small TOM proteins. Can associate with the SAM(core) complex as well as the MDM12-MMM1 complex, both involved in late steps of the major beta-barrel assembly pathway, that is responsible for biogenesis of all outer membrane beta-barrel proteins. May act as a switch that shuttles between both complexes and channels precursor proteins into the TOM40-specific pathway. Plays a role in mitochondrial morphology and in the inheritance of mitochondria. The protein is Mitochondrial distribution and morphology protein 10 of Debaryomyces hansenii (strain ATCC 36239 / CBS 767 / BCRC 21394 / JCM 1990 / NBRC 0083 / IGC 2968) (Yeast).